We begin with the raw amino-acid sequence, 347 residues long: Quinolinate synthase (347 aa).

Iminosuccinate contacts are provided by histidine 47 and serine 68. A [4Fe-4S] cluster-binding site is contributed by cysteine 113. Iminosuccinate is bound by residues 139 to 141 (YAN) and serine 156. Residue cysteine 200 coordinates [4Fe-4S] cluster. Iminosuccinate is bound by residues 226–228 (HPE) and threonine 243. Cysteine 297 is a [4Fe-4S] cluster binding site.

This sequence belongs to the quinolinate synthase family. Type 1 subfamily. [4Fe-4S] cluster is required as a cofactor.

It localises to the cytoplasm. The enzyme catalyses iminosuccinate + dihydroxyacetone phosphate = quinolinate + phosphate + 2 H2O + H(+). It participates in cofactor biosynthesis; NAD(+) biosynthesis; quinolinate from iminoaspartate: step 1/1. Functionally, catalyzes the condensation of iminoaspartate with dihydroxyacetone phosphate to form quinolinate. This chain is Quinolinate synthase, found in Salmonella heidelberg (strain SL476).